A 318-amino-acid chain; its full sequence is ADP-L-glycero-D-manno-heptose-6-epimerase (318 aa).

NADP(+) is bound by residues 10–11 (FI), 31–32 (DN), lysine 38, lysine 53, 76–80 (QGACS), and asparagine 93. Tyrosine 141 serves as the catalytic Proton acceptor. Lysine 145 is a binding site for NADP(+). Asparagine 172 serves as a coordination point for substrate. The NADP(+) site is built by valine 173 and lysine 181. Lysine 181 functions as the Proton acceptor in the catalytic mechanism. Substrate-binding positions include arginine 183, histidine 190, 204–207 (FEGS), arginine 212, and tyrosine 276.

This sequence belongs to the NAD(P)-dependent epimerase/dehydratase family. HldD subfamily. In terms of assembly, homopentamer. The cofactor is NADP(+).

It carries out the reaction ADP-D-glycero-beta-D-manno-heptose = ADP-L-glycero-beta-D-manno-heptose. It participates in nucleotide-sugar biosynthesis; ADP-L-glycero-beta-D-manno-heptose biosynthesis; ADP-L-glycero-beta-D-manno-heptose from D-glycero-beta-D-manno-heptose 7-phosphate: step 4/4. In terms of biological role, catalyzes the interconversion between ADP-D-glycero-beta-D-manno-heptose and ADP-L-glycero-beta-D-manno-heptose via an epimerization at carbon 6 of the heptose. This is ADP-L-glycero-D-manno-heptose-6-epimerase from Brachyspira hyodysenteriae (strain ATCC 49526 / WA1).